We begin with the raw amino-acid sequence, 849 residues long: Protein lap1 (849 aa).

LRR repeat units lie at residues 18 to 39 (VIDK…WQHE), 41 to 62 (TLEE…LFYC), 64 to 85 (GLRV…IGSL), 87 to 108 (QLQH…IKSC), 110 to 131 (HLTH…ITSL), 133 to 155 (SLQE…GRLV), 156 to 177 (NLRI…MVRL), 179 to 200 (NLQR…VGEL), 202 to 224 (SLRE…GKLR), 225 to 246 (DLQH…LSNW), 248 to 269 (NVEV…VGML), 271 to 292 (SLVT…ISYL), 294 to 315 (QLEE…IGML), 317 to 338 (SLRF…LCSC), 340 to 362 (QLSV…GNLS), 363 to 384 (KMKV…MLNL), and 386 to 407 (NLTS…QYLD). The disordered stretch occupies residues 716–752 (NNISNNLEPNPEEEDQELDDTMSQHSLNSTATNNTSK). Acidic residues predominate over residues 725-735 (NPEEEDQELDD). Over residues 736–752 (TMSQHSLNSTATNNTSK) the composition is skewed to polar residues. In terms of domain architecture, PDZ spans 770-849 (VKQVTLKWEN…TVMNIMLSRK (80 aa)).

The protein belongs to the LAP (LRR and PDZ) protein family.

Its function is as follows. May have a role in assembling adherens junctions. The sequence is that of Protein lap1 from Drosophila melanogaster (Fruit fly).